Reading from the N-terminus, the 492-residue chain is ERAD-associated E3 ubiquitin-protein ligase HRD1A (492 aa).

Over 1–3 (MIR) the chain is Cytoplasmic. A helical transmembrane segment spans residues 4–24 (LRTYAGLSFMATLAVIYHAFS). Topologically, residues 25–40 (SRGQFYPATVYLSTSK) are lumenal. A helical transmembrane segment spans residues 41 to 61 (ISLVLLLNMCLVLMLSLWHLV). Residues 62–98 (KFVFLGSLREAEVERLNEQAWRELMEILFAITIFRQD) lie on the Cytoplasmic side of the membrane. Residues 99–119 (FSSGFLPLVVTLLLIKALHWL) traverse the membrane as a helical segment. The Lumenal portion of the chain corresponds to 120–135 (AQKRVEYIETTPSVSK). A helical transmembrane segment spans residues 136–156 (LSHFRIVSFMGFLLLVDSLFM). The Cytoplasmic portion of the chain corresponds to 157–170 (YSSIRHLIQSRQAS). A helical transmembrane segment spans residues 171–191 (VSLFFSFEYMILATTTVAIFV). At 192-221 (KYVFYVTDMLMDGQWEKKPVYTFYLELIRD) the chain is on the lumenal side. A helical membrane pass occupies residues 222 to 242 (LLHLSMYICFFFVIFMNYGVP). Topologically, residues 243–492 (LHLLRELYET…KGKSVADAAE (250 aa)) are cytoplasmic. Residues 292–330 (CIICREEMTNAKKLICGHLFHVHCLRSWLERQQTCPTCR) form an RING-type; atypical zinc finger. Disordered regions lie at residues 339–379 (ATSA…NSLS) and 470–492 (ETRKPESAGEPENKGKSVADAAE). Low complexity predominate over residues 351–378 (QGSQQGTSSSGNQGSEISSSAGVSNNSL). Residues 470-486 (ETRKPESAGEPENKGKS) are compositionally biased toward basic and acidic residues.

It belongs to the HRD1 family.

The protein resides in the endoplasmic reticulum membrane. It carries out the reaction S-ubiquitinyl-[E2 ubiquitin-conjugating enzyme]-L-cysteine + [acceptor protein]-L-lysine = [E2 ubiquitin-conjugating enzyme]-L-cysteine + N(6)-ubiquitinyl-[acceptor protein]-L-lysine.. The protein operates within protein modification; protein ubiquitination. Probable component of the HRD1 ubiquitin ligase complex that mediates the rapid degradation of misfolded endoplasmic reticulum (ER) proteins, a process called ER-associated degradation (ERAD). Targets the misfolded LRR receptor kinase BRI1. Functions redundantly with HRD3B. The protein is ERAD-associated E3 ubiquitin-protein ligase HRD1A of Arabidopsis thaliana (Mouse-ear cress).